We begin with the raw amino-acid sequence, 188 residues long: Methylamine dehydrogenase light chain (188 aa).

A signal peptide (tat-type signal) is located at residues 1-57 (MLGNFRFDDMVEKLSRRVAGRTSRRGAIGRLGTVLAGAALVPLLPVDRRGRVSRANA). Intrachain disulfides connect cysteine 80/cysteine 145, cysteine 86/cysteine 118, cysteine 93/cysteine 178, cysteine 95/cysteine 143, cysteine 103/cysteine 134, and cysteine 135/cysteine 166. Tryptophan 114 is subject to Tryptophylquinone. Positions 114 to 165 (WVASCYNPTDGQSYLIAYRDCCGYNVSGRCPCLNTEGELPVYRPEFANDIIW) form a cross-link, tryptophan tryptophylquinone (Trp-Trp).

It belongs to the aromatic amine dehydrogenase light chain family. As to quaternary structure, heterotetramer of two light and two heavy chains. Tryptophan tryptophylquinone residue is required as a cofactor. Post-translationally, predicted to be exported by the Tat system. The position of the signal peptide cleavage has been experimentally proven. Tryptophan tryptophylquinone (TTQ) is formed by oxidation of the indole ring of a tryptophan to form tryptophylquinone followed by covalent cross-linking with another tryptophan residue.

It is found in the periplasm. It catalyses the reaction 2 oxidized [amicyanin] + methylamine + H2O = 2 reduced [amicyanin] + formaldehyde + NH4(+) + 2 H(+). It functions in the pathway one-carbon metabolism; methylamine degradation; formaldehyde from methylamine: step 1/1. In terms of biological role, methylamine dehydrogenase carries out the oxidation of methylamine. Electrons are passed from methylamine dehydrogenase to amicyanin. The polypeptide is Methylamine dehydrogenase light chain (mauA) (Paracoccus versutus (Thiobacillus versutus)).